The following is a 605-amino-acid chain: Replication and transcription activator (605 aa).

2 disordered regions span residues 307–380 (SLPS…AEPE) and 447–499 (RIRP…AVTP). Over residues 321–338 (SADCGDSSSSSSDSGNSD) the composition is skewed to low complexity. Positions 341 to 353 (QSEREEARAEAPR) are enriched in basic and acidic residues. The segment covering 355–364 (RAPKSRRTSR) has biased composition (basic residues).

It belongs to the herpesviridae Rta family. As to quaternary structure, interacts with human ATF7IP protein, leading to promote and regulate host genes in virus-infected cells. Interacts with RNA polymerase III complex; this interaction downregulates small RNA transcription and 5'-pppRNA production.

The protein localises to the host nucleus. Its subcellular location is the virion tegument. Functionally, immediate-early transcription factor that controls the initiation of viral lytic gene expression and lytic reactivation from latency. Triggers lytic replication, and initiates a cellular senescence program in epithelial cells. Up-regulates human DCR3/TNFRSF6B by directly binding to its receptor. Globally induces a proteasome-dependent loss of SUMOylated proteins in the host cell and the loss of promeylocytic leukemia nuclear bodies. Improves the stability of the triplex capsid protein TRX1 by reducing the ubiquitination level of the latter. Mediates evasion of inflammasome activation and antiviral responses (T- and NK cell activation) during EBV early lytic infection. In Epstein-Barr virus (strain B95-8) (HHV-4), this protein is Replication and transcription activator.